Here is a 537-residue protein sequence, read N- to C-terminus: CTP synthase (537 aa).

The interval 1–269 (MNQTKYIFVT…DVVALKKLDL (269 aa)) is amidoligase domain. S15 serves as a coordination point for CTP. S15 is a UTP binding site. 16–21 (SLGKGI) contacts ATP. Y56 lines the L-glutamine pocket. D73 is a binding site for ATP. Mg(2+)-binding residues include D73 and E143. Residues 150-152 (DIE), 190-195 (KTKPTQ), and K226 contribute to the CTP site. UTP is bound by residues 190–195 (KTKPTQ) and K226. The Glutamine amidotransferase type-1 domain occupies 295-537 (NIGLVGKYVE…VAAAVNAHKK (243 aa)). G357 contacts L-glutamine. C384 serves as the catalytic Nucleophile; for glutamine hydrolysis. L-glutamine contacts are provided by residues 385–388 (LGMQ), E408, and R465. Residues H510 and E512 contribute to the active site.

The protein belongs to the CTP synthase family. In terms of assembly, homotetramer.

It catalyses the reaction UTP + L-glutamine + ATP + H2O = CTP + L-glutamate + ADP + phosphate + 2 H(+). The catalysed reaction is L-glutamine + H2O = L-glutamate + NH4(+). The enzyme catalyses UTP + NH4(+) + ATP = CTP + ADP + phosphate + 2 H(+). Its pathway is pyrimidine metabolism; CTP biosynthesis via de novo pathway; CTP from UDP: step 2/2. Its activity is regulated as follows. Allosterically activated by GTP, when glutamine is the substrate; GTP has no effect on the reaction when ammonia is the substrate. The allosteric effector GTP functions by stabilizing the protein conformation that binds the tetrahedral intermediate(s) formed during glutamine hydrolysis. Inhibited by the product CTP, via allosteric rather than competitive inhibition. In terms of biological role, catalyzes the ATP-dependent amination of UTP to CTP with either L-glutamine or ammonia as the source of nitrogen. Regulates intracellular CTP levels through interactions with the four ribonucleotide triphosphates. This Flavobacterium johnsoniae (strain ATCC 17061 / DSM 2064 / JCM 8514 / BCRC 14874 / CCUG 350202 / NBRC 14942 / NCIMB 11054 / UW101) (Cytophaga johnsonae) protein is CTP synthase.